A 243-amino-acid chain; its full sequence is Triosephosphate isomerase (243 aa).

Position 9–11 (9–11 (NWK)) interacts with substrate. His-96 (electrophile) is an active-site residue. Glu-165 (proton acceptor) is an active-site residue. Residues Gly-171, Ser-204, and 225 to 226 (GG) each bind substrate.

This sequence belongs to the triosephosphate isomerase family. In terms of assembly, homodimer.

It localises to the cytoplasm. It carries out the reaction D-glyceraldehyde 3-phosphate = dihydroxyacetone phosphate. Its pathway is carbohydrate biosynthesis; gluconeogenesis. The protein operates within carbohydrate degradation; glycolysis; D-glyceraldehyde 3-phosphate from glycerone phosphate: step 1/1. In terms of biological role, involved in the gluconeogenesis. Catalyzes stereospecifically the conversion of dihydroxyacetone phosphate (DHAP) to D-glyceraldehyde-3-phosphate (G3P). The polypeptide is Triosephosphate isomerase (Synechococcus sp. (strain CC9311)).